Consider the following 329-residue polypeptide: MMTPNSTELSAIPMGVLGLSLALASLIVIANLLLALGIALDRHLRSPPAGCFFLSLLLAGLLTGLALPMLPGLWSRNHQGYWSCLLLHLTPNFCFLSLLANLLLVHGERYMAVLQPLRPHGSVRLALFLTWVSSLFFASLPALGWNHWSPDANCSSQAVFPAPYLYLEVYGLLLPAVGATALLSVRVLATAHRQLCEIRRLERAVCRDVPSTLARALTWRQARAQAGATLLFLLCWGPYVATLLLSVLAYERRPPLGPGTLLSLISLGSTSAAAVPVAMGLGDQRYTAPWRTAAQRCLRVLRGRAKRDNPGPSTAYHTSSQCSIDLDLN.

The Extracellular portion of the chain corresponds to 1-15 (MMTPNSTELSAIPMG). Residue Asn-5 is glycosylated (N-linked (GlcNAc...) asparagine). A helical membrane pass occupies residues 16–36 (VLGLSLALASLIVIANLLLAL). Residues 37-49 (GIALDRHLRSPPA) are Cytoplasmic-facing. Residues 50–70 (GCFFLSLLLAGLLTGLALPML) traverse the membrane as a helical segment. Residues 71–84 (PGLWSRNHQGYWSC) are Extracellular-facing. An intrachain disulfide couples Cys-84 to Cys-154. The chain crosses the membrane as a helical span at residues 85–105 (LLLHLTPNFCFLSLLANLLLV). Topologically, residues 106–124 (HGERYMAVLQPLRPHGSVR) are cytoplasmic. Residues 125 to 145 (LALFLTWVSSLFFASLPALGW) traverse the membrane as a helical segment. At 146–164 (NHWSPDANCSSQAVFPAPY) the chain is on the extracellular side. Residue Asn-153 is glycosylated (N-linked (GlcNAc...) asparagine). A helical transmembrane segment spans residues 165-185 (LYLEVYGLLLPAVGATALLSV). At 186 to 229 (RVLATAHRQLCEIRRLERAVCRDVPSTLARALTWRQARAQAGAT) the chain is on the cytoplasmic side. Residues 230-250 (LLFLLCWGPYVATLLLSVLAY) traverse the membrane as a helical segment. Residues 251 to 260 (ERRPPLGPGT) are Extracellular-facing. A helical membrane pass occupies residues 261–281 (LLSLISLGSTSAAAVPVAMGL). The Cytoplasmic portion of the chain corresponds to 282-329 (GDQRYTAPWRTAAQRCLRVLRGRAKRDNPGPSTAYHTSSQCSIDLDLN).

This sequence belongs to the G-protein coupled receptor 1 family.

It is found in the cell membrane. In terms of biological role, receptor for bile acid. Bile acid-binding induces its internalization, activation of extracellular signal-regulated kinase and intracellular cAMP production. May be involved in the suppression of macrophage functions by bile acids. Involved in bile acid promoted GLP1R secretion. The chain is G-protein coupled bile acid receptor 1 (Gpbar1) from Mus musculus (Mouse).